We begin with the raw amino-acid sequence, 288 residues long: 2-dehydro-3-deoxyphosphooctonate aldolase (288 aa).

The protein belongs to the KdsA family.

The protein localises to the cytoplasm. It catalyses the reaction D-arabinose 5-phosphate + phosphoenolpyruvate + H2O = 3-deoxy-alpha-D-manno-2-octulosonate-8-phosphate + phosphate. The protein operates within carbohydrate biosynthesis; 3-deoxy-D-manno-octulosonate biosynthesis; 3-deoxy-D-manno-octulosonate from D-ribulose 5-phosphate: step 2/3. It participates in bacterial outer membrane biogenesis; lipopolysaccharide biosynthesis. This Bdellovibrio bacteriovorus (strain ATCC 15356 / DSM 50701 / NCIMB 9529 / HD100) protein is 2-dehydro-3-deoxyphosphooctonate aldolase.